The chain runs to 402 residues: C2H2 finger domain transcription factor CON7 (402 aa).

The segment at 1-247 (MLASSRQPRH…GAQQHKRPRR (247 aa)) is disordered. 2 stretches are compositionally biased toward polar residues: residues 19–49 (LSSSTLHRSGSPQTGTLRQDATTPTLATSVG) and 72–86 (CGDNQSEAQSVTVDT). Low complexity predominate over residues 87 to 98 (SSAAQYNASAQQ). 2 stretches are compositionally biased toward polar residues: residues 99-116 (EVRSNNPGNYSASATPTS) and 125-151 (ARSSSFPDHLQQRSYHPASNHSGSSGD). Residues 256-282 (YKCGWQGCEKAYGTLNHLNAHVTMQSH) form a C2H2-type zinc finger. Positions 289 to 323 (EEFKEIRKEWKARKKEEEAARKADEERQRQAAQSQ) form a coiled coil. Basic and acidic residues predominate over residues 302–317 (KKEEEAARKADEERQR). Residues 302-402 (KKEEEAARKA…GSNQAMYNQR (101 aa)) form a disordered region. Composition is skewed to polar residues over residues 322–341 (SQGGSTEGQAGSDVSQSSNG), 363–373 (AATSTSVQQQP), and 392–402 (GGSNQAMYNQR).

It localises to the nucleus. Transcription factor that plays a central role in appressorium formation and pathogenicity. Required for the expression of a large set of genes including factors that might play a role in membrane metabolism and ergosterol biosynthesis, the chitin-binding protein CBP1,as well as CHS7 that is essential for normal pathogenic development. This chain is C2H2 finger domain transcription factor CON7, found in Pyricularia oryzae (strain 70-15 / ATCC MYA-4617 / FGSC 8958) (Rice blast fungus).